A 208-amino-acid chain; its full sequence is dITP/XTP pyrophosphatase (208 aa).

Residue 16–21 coordinates substrate; sequence SNNKGK. The Proton acceptor role is filled by Asp-79. A Mg(2+)-binding site is contributed by Asp-79. Substrate is bound by residues Ser-80, 166-169, Lys-189, and 194-195; these read FGYD and HR.

The protein belongs to the HAM1 NTPase family. Homodimer. Mg(2+) is required as a cofactor.

The enzyme catalyses XTP + H2O = XMP + diphosphate + H(+). The catalysed reaction is dITP + H2O = dIMP + diphosphate + H(+). It catalyses the reaction ITP + H2O = IMP + diphosphate + H(+). In terms of biological role, pyrophosphatase that catalyzes the hydrolysis of nucleoside triphosphates to their monophosphate derivatives, with a high preference for the non-canonical purine nucleotides XTP (xanthosine triphosphate), dITP (deoxyinosine triphosphate) and ITP. Seems to function as a house-cleaning enzyme that removes non-canonical purine nucleotides from the nucleotide pool, thus preventing their incorporation into DNA/RNA and avoiding chromosomal lesions. In Acinetobacter baumannii (strain AB307-0294), this protein is dITP/XTP pyrophosphatase.